A 535-amino-acid polypeptide reads, in one-letter code: GMP synthase [glutamine-hydrolyzing] (535 aa).

Residues Leu21–Thr211 enclose the Glutamine amidotransferase type-1 domain. Residue Cys98 is the Nucleophile of the active site. Active-site residues include His185 and Glu187. One can recognise a GMPS ATP-PPase domain in the interval Trp212–Arg410. Ser239–Ser245 serves as a coordination point for ATP.

As to quaternary structure, homodimer.

The enzyme catalyses XMP + L-glutamine + ATP + H2O = GMP + L-glutamate + AMP + diphosphate + 2 H(+). Its pathway is purine metabolism; GMP biosynthesis; GMP from XMP (L-Gln route): step 1/1. Catalyzes the synthesis of GMP from XMP. The chain is GMP synthase [glutamine-hydrolyzing] from Thermosynechococcus vestitus (strain NIES-2133 / IAM M-273 / BP-1).